We begin with the raw amino-acid sequence, 433 residues long: 4-hydroxy-3-methylbut-2-en-1-yl diphosphate synthase (flavodoxin) (433 aa).

Positions 1 to 13 (MNKPETVTENSLA) are enriched in polar residues. A disordered region spans residues 1-23 (MNKPETVTENSLASDVAGPAPRH). Cys-314, Cys-317, Cys-360, and Glu-367 together coordinate [4Fe-4S] cluster.

This sequence belongs to the IspG family. Requires [4Fe-4S] cluster as cofactor.

The enzyme catalyses (2E)-4-hydroxy-3-methylbut-2-enyl diphosphate + oxidized [flavodoxin] + H2O + 2 H(+) = 2-C-methyl-D-erythritol 2,4-cyclic diphosphate + reduced [flavodoxin]. It participates in isoprenoid biosynthesis; isopentenyl diphosphate biosynthesis via DXP pathway; isopentenyl diphosphate from 1-deoxy-D-xylulose 5-phosphate: step 5/6. In terms of biological role, converts 2C-methyl-D-erythritol 2,4-cyclodiphosphate (ME-2,4cPP) into 1-hydroxy-2-methyl-2-(E)-butenyl 4-diphosphate. This chain is 4-hydroxy-3-methylbut-2-en-1-yl diphosphate synthase (flavodoxin), found in Bradyrhizobium sp. (strain ORS 278).